The following is a 235-amino-acid chain: Small ribosomal subunit protein eS6 (235 aa).

Positions 190-212 (GFHPRERGERRRKSVRGRMIPDP) are disordered.

The protein belongs to the eukaryotic ribosomal protein eS6 family.

The sequence is that of Small ribosomal subunit protein eS6 from Aeropyrum pernix (strain ATCC 700893 / DSM 11879 / JCM 9820 / NBRC 100138 / K1).